Reading from the N-terminus, the 458-residue chain is Divalent metal cation transporter MntH (458 aa).

A run of 11 helical transmembrane segments spans residues 38-58 (GFWK…VGYM), 76-96 (SLLS…AMAA), 119-139 (GGFL…AEII), 151-171 (MPLI…LLLM), 180-200 (AVVA…VILA), 223-243 (MLYL…LFLG), 275-295 (LTMA…LFFG), 315-335 (IVGA…LLAS), 370-390 (LMSV…EAKI), 393-413 (LLTF…IPLV), and 437-457 (FISG…LGFV).

It belongs to the NRAMP family.

It is found in the cell membrane. In terms of biological role, h(+)-stimulated, divalent metal cation uptake system. The protein is Divalent metal cation transporter MntH of Lacticaseibacillus paracasei (strain ATCC 334 / BCRC 17002 / CCUG 31169 / CIP 107868 / KCTC 3260 / NRRL B-441) (Lactobacillus paracasei).